The sequence spans 258 residues: Arylamine N-acetyltransferase 1 (258 aa).

Catalysis depends on C59, which acts as the Acyl-thioester intermediate. 97–98 (IH) is a substrate binding site. Residues H98 and D113 contribute to the active site. CoA contacts are provided by Y199 and T205.

The protein belongs to the arylamine N-acetyltransferase family.

The protein localises to the cytoplasm. It catalyses the reaction an arylamine + acetyl-CoA = an N-acetylarylamine + CoA. Functionally, participates in the detoxification of a plethora of hydrazine and arylamine drugs. The polypeptide is Arylamine N-acetyltransferase 1 (NAT1) (Felis catus (Cat)).